The sequence spans 151 residues: Probable cGMP 3',5'-cyclic phosphodiesterase subunit delta (151 aa).

The protein belongs to the PDE6D/unc-119 family. Interacts with Pde6.

The protein localises to the nucleus. It is found in the cytoplasm. The chain is Probable cGMP 3',5'-cyclic phosphodiesterase subunit delta from Drosophila sechellia (Fruit fly).